Here is a 188-residue protein sequence, read N- to C-terminus: SRP-independent targeting protein 3 (188 aa).

The chain crosses the membrane as a helical span at residues Thr-27–Tyr-47. Ser-157 is modified (phosphoserine). A disordered region spans residues Ser-157–Glu-188. The span at Lys-168–Arg-179 shows a compositional bias: basic and acidic residues.

Belongs to the PHO88 family. Interacts with ENV10/SND2. ENV10/SND2 and PHO88/SND3 form a complex with the translocon in the endoplasmic reticulum membrane.

The protein localises to the endoplasmic reticulum membrane. It is found in the mitochondrion. Functionally, functions in the SND pathway, a SRP (signal recognition particle) and GET (guided entry of tail-anchored proteins) independent pathway for targeting a broad range of substrate proteins to the endoplasmic reticulum. SND functions in parallel to GET in targeting proteins with downstream hydrophobic motifs. Involved in inorganic phosphate uptake. Also involved in telomere length regulation and maintenance. The protein is SRP-independent targeting protein 3 of Saccharomyces cerevisiae (strain ATCC 204508 / S288c) (Baker's yeast).